Consider the following 91-residue polypeptide: DNA-binding protein HU (91 aa).

It belongs to the bacterial histone-like protein family.

Functionally, histone-like DNA-binding protein which is capable of wrapping DNA to stabilize it, and thus to prevent its denaturation under extreme environmental conditions. Also seems to act as a fortuitous virulence factor in delayed sequelae by binding to heparan sulfate-proteoglycans in the extracellular matrix of target organs and acting as a nidus for in situ immune complex formation. The protein is DNA-binding protein HU (hup) of Streptococcus pyogenes serotype M1.